The primary structure comprises 225 residues: Pre-mRNA-splicing factor SPF27 (225 aa).

Residues 138–222 are a coiled coil; it reads SNDNLALMIE…QGDENKENIR (85 aa).

Belongs to the SPF27 family. Component of the pre-catalytic and catalytic spliceosome complexes. Component of the postcatalytic spliceosome P complex.

Its subcellular location is the nucleus. Its function is as follows. Required for pre-mRNA splicing as component of the activated spliceosome. May have a scaffolding role in the spliceosome assembly as it contacts all other components of the core complex. This chain is Pre-mRNA-splicing factor SPF27 (bcas2), found in Danio rerio (Zebrafish).